The sequence spans 629 residues: 1-deoxy-D-xylulose-5-phosphate synthase (629 aa).

Thiamine diphosphate is bound by residues His78 and 119-121 (AHS). Asp150 is a Mg(2+) binding site. Residues 151–152 (GA), Asn179, Tyr286, and Glu368 contribute to the thiamine diphosphate site. Asn179 is a binding site for Mg(2+).

This sequence belongs to the transketolase family. DXPS subfamily. As to quaternary structure, homodimer. Requires Mg(2+) as cofactor. It depends on thiamine diphosphate as a cofactor.

It carries out the reaction D-glyceraldehyde 3-phosphate + pyruvate + H(+) = 1-deoxy-D-xylulose 5-phosphate + CO2. It participates in metabolic intermediate biosynthesis; 1-deoxy-D-xylulose 5-phosphate biosynthesis; 1-deoxy-D-xylulose 5-phosphate from D-glyceraldehyde 3-phosphate and pyruvate: step 1/1. Catalyzes the acyloin condensation reaction between C atoms 2 and 3 of pyruvate and glyceraldehyde 3-phosphate to yield 1-deoxy-D-xylulose-5-phosphate (DXP). The protein is 1-deoxy-D-xylulose-5-phosphate synthase of Acidovorax sp. (strain JS42).